The sequence spans 126 residues: Large ribosomal subunit protein bL12c (126 aa).

The protein belongs to the bacterial ribosomal protein bL12 family. In terms of assembly, homodimer. Part of the ribosomal stalk of the 50S ribosomal subunit. Forms a multimeric L10(L12)X complex, where L10 forms an elongated spine to which 2 to 4 L12 dimers bind in a sequential fashion. Binds GTP-bound translation factors.

It is found in the plastid. The protein resides in the cyanelle. Its function is as follows. Forms part of the ribosomal stalk which helps the ribosome interact with GTP-bound translation factors. Is thus essential for accurate translation. This Cyanophora paradoxa protein is Large ribosomal subunit protein bL12c.